Consider the following 239-residue polypeptide: IkB-like protein (239 aa).

ANK repeat units lie at residues 48-77 (NKIT…YPGE), 87-116 (DGNS…KNGI), 124-153 (NGVT…NPNR), and 158-187 (KGFT…KPLF). The short motif at 81–87 (HYRRDKD) is the Nuclear localization signal element. The short motif at 203–214 (KKKPKIIITGCE) is the Nuclear localization signal element. A PxIxITxC motif; Interaction with host PPP3CA motif is present at residues 206–213 (PKIIITGC). An FLCV motif motif is present at residues 228-231 (FLCV).

It belongs to the asfivirus A238L family. In terms of assembly, interacts with host PPIA. Interacts with host PPP3CA/Calcineurin. Interacts with host RELA/p65; interaction of the 32 kDa form with host RELA results in the formation of a stable complex with NF-kappa-B. Interacts with host PPP3R1. Interacts with host EP300; this interaction inhibits the association of host EP300 with host RELA, JUN and NFATC2. Post-translationally, the protein exists in a 28 kDa and a 32 kDa form, probably due to post-translational modifications which are neither phosphorylation, nor sumoylation.

Its subcellular location is the host nucleus. It is found in the host cytoplasm. Its function is as follows. IkB-like protein that inhibits the binding of NF-kappa-B to DNA, thereby downregulating pro-inflammatory cytokine production. Forms a heterodimer with the NF-kappa-B subunit RELA/p65 and prevents the activation of the NF-kappa-B transcription factor. Inhibits calcineurin function, which is required for the induction of nuclear factor of activated T cells (NFAT)-dependent immune response genes. Prevents the binding of substrates to calcineurin without affecting the phosphatase activity. Does not contain the serine residues that are phosphorylated by host IkB kinase and thus is not degraded following stimulation of the NFkB pathway. The protein is IkB-like protein (A238L) of Ornithodoros (relapsing fever ticks).